We begin with the raw amino-acid sequence, 81 residues long: Prophage excisionase-like protein (81 aa).

To lambdoid phages excisionases.

The sequence is that of Prophage excisionase-like protein (xisE) from Escherichia coli (strain K12).